The primary structure comprises 286 residues: 4-hydroxybenzoate octaprenyltransferase (286 aa).

7 consecutive transmembrane segments (helical) span residues 21–40 (GTLL…AGGM), 95–115 (ILFV…NGLV), 142–162 (FLGI…TGEV), 167–187 (WWLF…YAMV), 210–230 (QIIG…GWSA), 235–255 (LYGL…MLIF), and 266–286 (FLNN…DYLI).

This sequence belongs to the UbiA prenyltransferase family. The cofactor is Mg(2+).

The protein resides in the cell inner membrane. It catalyses the reaction all-trans-octaprenyl diphosphate + 4-hydroxybenzoate = 4-hydroxy-3-(all-trans-octaprenyl)benzoate + diphosphate. It functions in the pathway cofactor biosynthesis; ubiquinone biosynthesis. Catalyzes the prenylation of para-hydroxybenzoate (PHB) with an all-trans polyprenyl group. Mediates the second step in the final reaction sequence of ubiquinone-8 (UQ-8) biosynthesis, which is the condensation of the polyisoprenoid side chain with PHB, generating the first membrane-bound Q intermediate 3-octaprenyl-4-hydroxybenzoate. In Shewanella baltica (strain OS155 / ATCC BAA-1091), this protein is 4-hydroxybenzoate octaprenyltransferase.